We begin with the raw amino-acid sequence, 360 residues long: MNSIIVNKLIALQERFNVLEKLLSKPNAIDDKKHFCTLAKEHARLSEIVVCFERWLDIKQEIINTKKLLEDVDMHDIAQDELKTFYLNRNNIEKNLKILLLPTDSNDKLGCFIELRAGTGGKEAAIFTGELFRMYVRYSEVRRWKMEIINATYGECGGYKEIIAKIPYRGAYSLLKFESGGHRVQRIPHTESQGRIHTSTCTIAVIPEIPDIELPSIDPHDLRIDTFRSSGAGGQHVNTTDSAIRITHVPSGLVVECQDERSQHKNKAKALSVLGSRLHAIEMKRRQQEVSCTRRNLLGTGDRSDRIRTYNFQQGRITDHRISFTSYKLNEIMNGELDLLIQPIIHQHQSDQLNKLLELE.

Gln235 is subject to N5-methylglutamine.

It belongs to the prokaryotic/mitochondrial release factor family. Methylated by PrmC. Methylation increases the termination efficiency of RF1.

Its subcellular location is the cytoplasm. Its function is as follows. Peptide chain release factor 1 directs the termination of translation in response to the peptide chain termination codons UAG and UAA. This is Peptide chain release factor 1 from Blochmanniella pennsylvanica (strain BPEN).